Here is a 175-residue protein sequence, read N- to C-terminus: Trafficking protein particle complex subunit 20 (175 aa).

This sequence belongs to the TRAPP small subunits family. Sedlin subfamily. In terms of assembly, part of the multisubunit TRAPP (transport protein particle) I complex composed of BET3, BET5, TRS20, TRS23, TRS31 and TRS33. Part of the multisubunit TRAPP (transport protein particle) II complex composed of BET3, BET5, TRS20, TRS23, TRS31, TRS33, TRS65, TRS85, TRS120 and TRS130. Part of the multisubunit TRAPP (transport protein particle) III complex composed of BET3, BET5, TRS20, TRS23, TRS31, TRS33 and TRS85.

It is found in the golgi apparatus. It localises to the cis-Golgi network. Its subcellular location is the endoplasmic reticulum. The protein localises to the preautophagosomal structure. Component of the TRAPP I, TRAPP II and TRAPP III complexes which act as guanine nucleotide exchange factors (GEF) for YPT1. TRAPP I plays a key role in the late stages of endoplasmic reticulum to Golgi traffic. TRAPP II plays a role in intra-Golgi transport. TRAPP III plays a role in autophagosome formation. In Saccharomyces cerevisiae (strain ATCC 204508 / S288c) (Baker's yeast), this protein is Trafficking protein particle complex subunit 20 (TRS20).